We begin with the raw amino-acid sequence, 483 residues long: ATP synthase subunit beta (483 aa).

168-175 (GGAGVGKT) lines the ATP pocket.

The protein belongs to the ATPase alpha/beta chains family. F-type ATPases have 2 components, CF(1) - the catalytic core - and CF(0) - the membrane proton channel. CF(1) has five subunits: alpha(3), beta(3), gamma(1), delta(1), epsilon(1). CF(0) has three main subunits: a(1), b(2) and c(9-12). The alpha and beta chains form an alternating ring which encloses part of the gamma chain. CF(1) is attached to CF(0) by a central stalk formed by the gamma and epsilon chains, while a peripheral stalk is formed by the delta and b chains.

The protein localises to the cell membrane. The enzyme catalyses ATP + H2O + 4 H(+)(in) = ADP + phosphate + 5 H(+)(out). In terms of biological role, produces ATP from ADP in the presence of a proton gradient across the membrane. The catalytic sites are hosted primarily by the beta subunits. The chain is ATP synthase subunit beta from Mycobacterium ulcerans (strain Agy99).